A 31-amino-acid polypeptide reads, in one-letter code: Cytochrome b6-f complex subunit 6 (31 aa).

Residues 7 to 25 (YSGFLLAAPIPASAPFTGL) form a helical membrane-spanning segment.

This sequence belongs to the PetL family. The 4 large subunits of the cytochrome b6-f complex are cytochrome b6, subunit IV (17 kDa polypeptide, PetD), cytochrome f and the Rieske protein, while the 4 small subunits are PetG, PetL, PetM and PetN. The complex functions as a dimer.

It is found in the plastid. The protein resides in the chloroplast thylakoid membrane. Functionally, component of the cytochrome b6-f complex, which mediates electron transfer between photosystem II (PSII) and photosystem I (PSI), cyclic electron flow around PSI, and state transitions. PetL is important for photoautotrophic growth as well as for electron transfer efficiency and stability of the cytochrome b6-f complex. In Huperzia lucidula (Shining clubmoss), this protein is Cytochrome b6-f complex subunit 6.